We begin with the raw amino-acid sequence, 359 residues long: Peptide chain release factor 1 (359 aa).

An N5-methylglutamine modification is found at Q235. Residues 283 to 294 (SKADEERSESRK) show a composition bias toward basic and acidic residues. A disordered region spans residues 283–309 (SKADEERSESRKSQVGSGDRSERIRTY).

The protein belongs to the prokaryotic/mitochondrial release factor family. Post-translationally, methylated by PrmC. Methylation increases the termination efficiency of RF1.

It localises to the cytoplasm. Its function is as follows. Peptide chain release factor 1 directs the termination of translation in response to the peptide chain termination codons UAG and UAA. The chain is Peptide chain release factor 1 from Mesorhizobium japonicum (strain LMG 29417 / CECT 9101 / MAFF 303099) (Mesorhizobium loti (strain MAFF 303099)).